Reading from the N-terminus, the 633-residue chain is Kinesin-like motor protein 9 (633 aa).

Residues 1–392 (MIQIFLRVKK…MRYSANAREI (392 aa)) form the Kinesin motor domain. ATP is bound at residue 94 to 101 (GVSGAGKT). Disordered regions lie at residues 393 to 423 (LPPP…TKAL), 531 to 556 (LEEE…SRKL), and 575 to 633 (KLWP…INEL). Positions 398–423 (NENSGSQSPSHSLLQKSKNTSSTKAL) are enriched in polar residues. Residues 417–541 (TSSTKALTSH…EEESIKESSA (125 aa)) adopt a coiled-coil conformation. Residues 578–587 (PQSTLIQAPN) are compositionally biased toward polar residues. A compositionally biased stretch (low complexity) spans 604–623 (VSPIKPLSPSRRPPLTSLYS). 3 positions are modified to phosphoserine: serine 605, serine 611, and serine 613. Over residues 624 to 633 (GTTDIDINEL) the composition is skewed to polar residues.

The protein belongs to the TRAFAC class myosin-kinesin ATPase superfamily. Kinesin family. As to quaternary structure, interacts with ase1. In terms of processing, phosphorylated by cdc2 and dephosphorylated by clp1. Dephosphorylation is required for the interaction with ase1.

The protein localises to the nucleus. It localises to the cytoplasm. It is found in the cytoskeleton. Its subcellular location is the microtubule organizing center. The protein resides in the spindle pole body. Its function is as follows. Kinesin-like motor protein involved in anaphase B spindle elongation. The polypeptide is Kinesin-like motor protein 9 (klp9) (Schizosaccharomyces pombe (strain 972 / ATCC 24843) (Fission yeast)).